Reading from the N-terminus, the 171-residue chain is Siroheme decarboxylase NirH subunit (171 aa).

Belongs to the Ahb/Nir family. As to quaternary structure, probably forms a complex composed of NirD, NirL, NirG and NirH. All proteins are required for the total conversion of siroheme to didecarboxysiroheme.

It carries out the reaction siroheme + 2 H(+) = 12,18-didecarboxysiroheme + 2 CO2. It participates in porphyrin-containing compound metabolism. Its function is as follows. Involved in heme d1 biosynthesis. Catalyzes the decarboxylation of siroheme into didecarboxysiroheme. This is Siroheme decarboxylase NirH subunit from Pseudomonas aeruginosa (strain ATCC 15692 / DSM 22644 / CIP 104116 / JCM 14847 / LMG 12228 / 1C / PRS 101 / PAO1).